We begin with the raw amino-acid sequence, 954 residues long: ATPase 9, plasma membrane-type (954 aa).

Residues 1–66 (MAGNKDSSWD…EKKENKVLKF (66 aa)) lie on the Cytoplasmic side of the membrane. A helical membrane pass occupies residues 67–86 (LGFMWNPLSWVMELAAIMAI). The Extracellular segment spans residues 87–98 (ALANGGGRPPDW). A helical membrane pass occupies residues 99-119 (QDFVGITVLLIINSTISFIEE). At 120–248 (NNAGNAAAAL…GHFQKVLTAI (129 aa)) the chain is on the cytoplasmic side. Residues 249 to 269 (GNFCICSIAIGMLIEIVVMYP) traverse the membrane as a helical segment. Residues 270–278 (IQKRAYRDG) are Extracellular-facing. A helical transmembrane segment spans residues 279 to 296 (IDNLLVLLIGGIPIAMPT). Topologically, residues 297 to 648 (VLSVTMAIGS…TSRAIFQRMK (352 aa)) are cytoplasmic. The active-site 4-aspartylphosphate intermediate is the Asp334. Residues Asp593 and Asp597 each contribute to the Mg(2+) site. Residues 649 to 670 (NYTIYAVSITIRIVMGFMLLAL) traverse the membrane as a helical segment. Residues 671–675 (IWKFD) are Extracellular-facing. The helical transmembrane segment at 676 to 698 (FSPFMVLIVAILNDGTIMTISKD) threads the bilayer. Topologically, residues 699–714 (RVKPSPLPDSWKLKEI) are cytoplasmic. The helical transmembrane segment at 715 to 735 (FATGVVLGTYLAVMTVVFFWA) threads the bilayer. The Extracellular portion of the chain corresponds to 736–756 (AESTDFFSAKFGVRSISGNPH). Residues 757-777 (ELTAAVYLQVSIVSQALIFVT) traverse the membrane as a helical segment. Residues 778-789 (RSRSWSYVERPG) lie on the Cytoplasmic side of the membrane. The chain crosses the membrane as a helical span at residues 790-810 (FWLISAFFMAQLIATLIAVYA). Over 811 to 818 (NWNFARIR) the chain is Extracellular. The helical transmembrane segment at 819–839 (GIGWGWAGVIWLYSIVFYIPL) threads the bilayer. The Cytoplasmic portion of the chain corresponds to 840–954 (DILKFIIRYS…IEAIQQHYTL (115 aa)). Thr886 carries the post-translational modification Phosphothreonine. A Phosphoserine modification is found at Ser936. The interaction with 14-3-3 proteins stretch occupies residues 952–954 (YTL). Position 953 is a phosphothreonine (Thr953).

Belongs to the cation transport ATPase (P-type) (TC 3.A.3) family. Type IIIA subfamily. Binds to 14-3-3 proteins. The binding is induced by phosphorylation of Thr-953. Binding to 14-3-3 proteins activates the H(+)-ATPase. In terms of tissue distribution, anther specific. Expressed in guard cells.

Its subcellular location is the membrane. It carries out the reaction ATP + H2O + H(+)(in) = ADP + phosphate + 2 H(+)(out). Functionally, the plasma membrane H(+) ATPase of plants and fungi generates a proton gradient that drives the active transport of nutrients by H(+)-symport. The resulting external acidification and/or internal alkinization may mediate growth responses. The protein is ATPase 9, plasma membrane-type (AHA9) of Arabidopsis thaliana (Mouse-ear cress).